The primary structure comprises 157 residues: Large ribosomal subunit protein uL15 (157 aa).

The protein belongs to the universal ribosomal protein uL15 family. As to quaternary structure, part of the 50S ribosomal subunit.

In terms of biological role, binds to the 23S rRNA. This is Large ribosomal subunit protein uL15 from Ehrlichia ruminantium (strain Welgevonden).